A 458-amino-acid chain; its full sequence is RuvB-like helicase 1 (458 aa).

Basic and acidic residues predominate over residues 1-18; it reads MVQITEVKENQSSRESRT. Residues 1–20 form a disordered region; the sequence is MVQITEVKENQSSRESRTAA. 73 to 80 provides a ligand contact to ATP; the sequence is GPPATGKT.

This sequence belongs to the RuvB family. As to quaternary structure, may form heterododecamers with RVB2. Component of the SWR1 chromatin remodeling complex, the INO80 chromatin remodeling complex, and of the R2TP complex.

The protein localises to the nucleus. The catalysed reaction is ATP + H2O = ADP + phosphate + H(+). In terms of biological role, DNA helicase which participates in several chromatin remodeling complexes, including the SWR1 and the INO80 complexes. The SWR1 complex mediates the ATP-dependent exchange of histone H2A for the H2A variant HZT1 leading to transcriptional regulation of selected genes by chromatin remodeling. The INO80 complex remodels chromatin by shifting nucleosomes and is involved in DNA repair. Also involved in pre-rRNA processing. The polypeptide is RuvB-like helicase 1 (RVB1) (Candida albicans (strain SC5314 / ATCC MYA-2876) (Yeast)).